We begin with the raw amino-acid sequence, 233 residues long: 2-C-methyl-D-erythritol 4-phosphate cytidylyltransferase (233 aa).

This sequence belongs to the IspD/TarI cytidylyltransferase family. IspD subfamily.

The catalysed reaction is 2-C-methyl-D-erythritol 4-phosphate + CTP + H(+) = 4-CDP-2-C-methyl-D-erythritol + diphosphate. The protein operates within isoprenoid biosynthesis; isopentenyl diphosphate biosynthesis via DXP pathway; isopentenyl diphosphate from 1-deoxy-D-xylulose 5-phosphate: step 2/6. Catalyzes the formation of 4-diphosphocytidyl-2-C-methyl-D-erythritol from CTP and 2-C-methyl-D-erythritol 4-phosphate (MEP). The polypeptide is 2-C-methyl-D-erythritol 4-phosphate cytidylyltransferase (Carboxydothermus hydrogenoformans (strain ATCC BAA-161 / DSM 6008 / Z-2901)).